The chain runs to 310 residues: Transcriptional activator BRRF1 (310 aa).

The protein belongs to the lymphocryptovirus BBRF1 family.

Functionally, enhances the ability of BRLF1 to induce lytic infection by cooperating with it to transcriptionally activate the BZLF1 promoter. This chain is Transcriptional activator BRRF1, found in Epstein-Barr virus (strain AG876) (HHV-4).